The following is a 328-amino-acid chain: Malate dehydrogenase (328 aa).

Residue glycine 11–glycine 17 participates in NAD(+) binding. Residues arginine 94 and arginine 100 each contribute to the substrate site. Residues asparagine 107, glutamine 114, and valine 131–asparagine 133 each bind NAD(+). Residues asparagine 133 and arginine 164 each coordinate substrate. Residue histidine 189 is the Proton acceptor of the active site.

The protein belongs to the LDH/MDH superfamily. MDH type 2 family.

It catalyses the reaction (S)-malate + NAD(+) = oxaloacetate + NADH + H(+). Catalyzes the reversible oxidation of malate to oxaloacetate. This chain is Malate dehydrogenase, found in Xylella fastidiosa (strain M23).